The following is a 398-amino-acid chain: Acetate kinase (398 aa).

A Mg(2+)-binding site is contributed by N9. An ATP-binding site is contributed by K16. R90 is a binding site for substrate. The active-site Proton donor/acceptor is the D147. ATP-binding positions include 207–211 (HIGNG), 282–284 (DLR), and 330–334 (GVGEN). E384 contacts Mg(2+).

It belongs to the acetokinase family. Homodimer. Mg(2+) is required as a cofactor. It depends on Mn(2+) as a cofactor.

It is found in the cytoplasm. The catalysed reaction is acetate + ATP = acetyl phosphate + ADP. It participates in metabolic intermediate biosynthesis; acetyl-CoA biosynthesis; acetyl-CoA from acetate: step 1/2. Catalyzes the formation of acetyl phosphate from acetate and ATP. Can also catalyze the reverse reaction. This is Acetate kinase from Staphylococcus haemolyticus (strain JCSC1435).